A 582-amino-acid chain; its full sequence is Protein NRT1/ PTR FAMILY 5.2 (582 aa).

11 helical membrane passes run W77 to G97, I100 to V120, A141 to G161, F189 to V209, W217 to L237, P334 to V354, I370 to Y390, I408 to A428, L452 to F472, G493 to V515, and Y538 to V558.

The protein belongs to the major facilitator superfamily. Proton-dependent oligopeptide transporter (POT/PTR) (TC 2.A.17) family. As to expression, expressed in roots. Detected in shoots, leaves and flowers.

It is found in the membrane. In terms of biological role, peptide transporter involved in stress tolerance in seeds during germination and in defense against virulent bacterial pathogens. This is Protein NRT1/ PTR FAMILY 5.2 (NPF5.2) from Arabidopsis thaliana (Mouse-ear cress).